The following is a 126-amino-acid chain: uncharacterized protein (126 aa).

The interval 83–126 (VPPPLDRSHESPEEFFPPQNRNRGGGPKAQIQRHPPEALEKTTH) is disordered. The span at 116–126 (HPPEALEKTTH) shows a compositional bias: basic and acidic residues.

This is an uncharacterized protein from Galliformes (FAdV-1).